Consider the following 512-residue polypeptide: D-alanine--D-alanyl carrier protein ligase (512 aa).

152-153 (TS) provides a ligand contact to ATP. Aspartate 199 lines the D-alanine pocket. 294–299 (NAYGPT) serves as a coordination point for ATP. Valine 303 provides a ligand contact to D-alanine. ATP is bound by residues aspartate 385, 397–400 (YGGR), and lysine 499. Lysine 499 provides a ligand contact to D-alanine.

The protein belongs to the ATP-dependent AMP-binding enzyme family. DltA subfamily.

The protein resides in the cytoplasm. The enzyme catalyses holo-[D-alanyl-carrier protein] + D-alanine + ATP = D-alanyl-[D-alanyl-carrier protein] + AMP + diphosphate. It participates in cell wall biogenesis; lipoteichoic acid biosynthesis. Its function is as follows. Catalyzes the first step in the D-alanylation of lipoteichoic acid (LTA), the activation of D-alanine and its transfer onto the D-alanyl carrier protein (Dcp) DltC. In an ATP-dependent two-step reaction, forms a high energy D-alanyl-AMP intermediate, followed by transfer of the D-alanyl residue as a thiol ester to the phosphopantheinyl prosthetic group of the Dcp. D-alanylation of LTA plays an important role in modulating the properties of the cell wall in Gram-positive bacteria, influencing the net charge of the cell wall. This Streptococcus pyogenes serotype M3 (strain SSI-1) protein is D-alanine--D-alanyl carrier protein ligase.